The primary structure comprises 245 residues: 4-hydroxy-tetrahydrodipicolinate reductase (245 aa).

NAD(+) contacts are provided by residues 7–12, 75–77, and 102–105; these read GAKGKV, GTT, and APNF. His132 (proton donor/acceptor) is an active-site residue. His133 contributes to the (S)-2,3,4,5-tetrahydrodipicolinate binding site. The active-site Proton donor is Lys136. 142 to 143 contacts (S)-2,3,4,5-tetrahydrodipicolinate; it reads GT.

It belongs to the DapB family.

The protein localises to the cytoplasm. It carries out the reaction (S)-2,3,4,5-tetrahydrodipicolinate + NAD(+) + H2O = (2S,4S)-4-hydroxy-2,3,4,5-tetrahydrodipicolinate + NADH + H(+). The enzyme catalyses (S)-2,3,4,5-tetrahydrodipicolinate + NADP(+) + H2O = (2S,4S)-4-hydroxy-2,3,4,5-tetrahydrodipicolinate + NADPH + H(+). The protein operates within amino-acid biosynthesis; L-lysine biosynthesis via DAP pathway; (S)-tetrahydrodipicolinate from L-aspartate: step 4/4. Catalyzes the conversion of 4-hydroxy-tetrahydrodipicolinate (HTPA) to tetrahydrodipicolinate. The protein is 4-hydroxy-tetrahydrodipicolinate reductase of Mycobacterium marinum (strain ATCC BAA-535 / M).